Here is a 262-residue protein sequence, read N- to C-terminus: Acyl-[acyl-carrier-protein]--UDP-N-acetylglucosamine O-acyltransferase (262 aa).

Belongs to the transferase hexapeptide repeat family. LpxA subfamily. As to quaternary structure, homotrimer.

The protein localises to the cytoplasm. The enzyme catalyses a (3R)-hydroxyacyl-[ACP] + UDP-N-acetyl-alpha-D-glucosamine = a UDP-3-O-[(3R)-3-hydroxyacyl]-N-acetyl-alpha-D-glucosamine + holo-[ACP]. It functions in the pathway glycolipid biosynthesis; lipid IV(A) biosynthesis; lipid IV(A) from (3R)-3-hydroxytetradecanoyl-[acyl-carrier-protein] and UDP-N-acetyl-alpha-D-glucosamine: step 1/6. Involved in the biosynthesis of lipid A, a phosphorylated glycolipid that anchors the lipopolysaccharide to the outer membrane of the cell. The polypeptide is Acyl-[acyl-carrier-protein]--UDP-N-acetylglucosamine O-acyltransferase (Aliivibrio fischeri (strain ATCC 700601 / ES114) (Vibrio fischeri)).